We begin with the raw amino-acid sequence, 361 residues long: Chorismate synthase (361 aa).

NADP(+) is bound at residue Arg47. FMN contacts are provided by residues Arg124 to Ser126, Gly286, Lys301 to Thr305, and Arg327.

This sequence belongs to the chorismate synthase family. In terms of assembly, homotetramer. Requires FMNH2 as cofactor.

The catalysed reaction is 5-O-(1-carboxyvinyl)-3-phosphoshikimate = chorismate + phosphate. It participates in metabolic intermediate biosynthesis; chorismate biosynthesis; chorismate from D-erythrose 4-phosphate and phosphoenolpyruvate: step 7/7. Its function is as follows. Catalyzes the anti-1,4-elimination of the C-3 phosphate and the C-6 proR hydrogen from 5-enolpyruvylshikimate-3-phosphate (EPSP) to yield chorismate, which is the branch point compound that serves as the starting substrate for the three terminal pathways of aromatic amino acid biosynthesis. This reaction introduces a second double bond into the aromatic ring system. The protein is Chorismate synthase of Prochlorococcus marinus (strain NATL2A).